A 77-amino-acid polypeptide reads, in one-letter code: Small ribosomal subunit protein bS18 (77 aa).

This sequence belongs to the bacterial ribosomal protein bS18 family. Part of the 30S ribosomal subunit. Forms a tight heterodimer with protein bS6.

Its function is as follows. Binds as a heterodimer with protein bS6 to the central domain of the 16S rRNA, where it helps stabilize the platform of the 30S subunit. This Shouchella clausii (strain KSM-K16) (Alkalihalobacillus clausii) protein is Small ribosomal subunit protein bS18.